The sequence spans 390 residues: Na(+)/H(+) antiporter NhaA 1 (390 aa).

Helical transmembrane passes span 14 to 34 (SGIL…NGVL), 59 to 79 (TILW…GLEL), 94 to 114 (VALP…IFYV), 125 to 145 (GWAI…FLLG), 154 to 174 (LFLL…IAIF), 179 to 199 (LSII…ILNY), 205 to 225 (IYIY…SGIH), 260 to 280 (PIVA…VVFS), 295 to 315 (IIFG…FLAI), 328 to 348 (WLHL…SLFI), and 362 to 382 (ANKI…YFVL).

This sequence belongs to the NhaA Na(+)/H(+) (TC 2.A.33) antiporter family.

It localises to the cell inner membrane. It catalyses the reaction Na(+)(in) + 2 H(+)(out) = Na(+)(out) + 2 H(+)(in). Its function is as follows. Na(+)/H(+) antiporter that extrudes sodium in exchange for external protons. This is Na(+)/H(+) antiporter NhaA 1 from Campylobacter fetus subsp. fetus (strain 82-40).